The sequence spans 144 residues: D-aminoacyl-tRNA deacylase (144 aa).

Residues 136 to 137 carry the Gly-cisPro motif, important for rejection of L-amino acids motif; the sequence is GP.

It belongs to the DTD family. Homodimer.

The protein resides in the cytoplasm. It carries out the reaction glycyl-tRNA(Ala) + H2O = tRNA(Ala) + glycine + H(+). It catalyses the reaction a D-aminoacyl-tRNA + H2O = a tRNA + a D-alpha-amino acid + H(+). Its function is as follows. An aminoacyl-tRNA editing enzyme that deacylates mischarged D-aminoacyl-tRNAs. Also deacylates mischarged glycyl-tRNA(Ala), protecting cells against glycine mischarging by AlaRS. Acts via tRNA-based rather than protein-based catalysis; rejects L-amino acids rather than detecting D-amino acids in the active site. By recycling D-aminoacyl-tRNA to D-amino acids and free tRNA molecules, this enzyme counteracts the toxicity associated with the formation of D-aminoacyl-tRNA entities in vivo and helps enforce protein L-homochirality. The sequence is that of D-aminoacyl-tRNA deacylase from Aliivibrio salmonicida (strain LFI1238) (Vibrio salmonicida (strain LFI1238)).